Reading from the N-terminus, the 353-residue chain is Nicotinate-nucleotide--dimethylbenzimidazole phosphoribosyltransferase (353 aa).

Residue E320 is the Proton acceptor of the active site.

It belongs to the CobT family.

It catalyses the reaction 5,6-dimethylbenzimidazole + nicotinate beta-D-ribonucleotide = alpha-ribazole 5'-phosphate + nicotinate + H(+). It participates in nucleoside biosynthesis; alpha-ribazole biosynthesis; alpha-ribazole from 5,6-dimethylbenzimidazole: step 1/2. Catalyzes the synthesis of alpha-ribazole-5'-phosphate from nicotinate mononucleotide (NAMN) and 5,6-dimethylbenzimidazole (DMB). This Syntrophotalea carbinolica (strain DSM 2380 / NBRC 103641 / GraBd1) (Pelobacter carbinolicus) protein is Nicotinate-nucleotide--dimethylbenzimidazole phosphoribosyltransferase.